Reading from the N-terminus, the 450-residue chain is Bestrophin homolog 1 (450 aa).

Residues 1–31 (MTINYHKEIMTSHPWTFFLLLFKWKGSIWKA) lie on the Cytoplasmic side of the membrane. The chain crosses the membrane as a helical span at residues 32–51 (VYMETIIFLICYGIISVIYK). At 52 to 60 (TAMGESSQR) the chain is on the extracellular side. Residues 61-82 (TFESLVRYFDKRLSYIPLEFVL) traverse the membrane as a helical segment. Over 83–242 (GFFVTTVVNR…DWVPLPLMYP (160 aa)) the chain is Cytoplasmic. A helical transmembrane segment spans residues 243–260 (QLVCLAVNLYFLVSIIAR). The Extracellular portion of the chain corresponds to 261–278 (QLVIEKHKMVDEVDVYFP). The chain crosses the membrane as a helical span at residues 279 to 292 (VMTFLQFIFYMGWL). The Cytoplasmic segment spans residues 293–450 (KVIDVMLNPF…WKIPTNPQKF (158 aa)). Residues Asn-300, Asp-305, and Asp-308 each contribute to the Ca(2+) site.

Belongs to the anion channel-forming bestrophin (TC 1.A.46) family. Calcium-sensitive chloride channel subfamily. As to quaternary structure, forms oligomers.

The protein localises to the cell membrane. It catalyses the reaction chloride(in) = chloride(out). Ligand-gated anion channel that allows the movement of chloride monoatomic anions across cell membranes when activated by Calcium (Ca2+). The chain is Bestrophin homolog 1 (best-1) from Caenorhabditis elegans.